The primary structure comprises 323 residues: MPLCTLRQMLGEARKHKYGVGAFNVNNMEQIQGIMKAVVQLKSPVILQCSRGALKYSDMIYLKKLCEAALEKHPDIPICIHLDHGDTLESVKMAIDLGFSSVMIDASHHPFDENVRITKEVVAYAHARGVSVEAELGTLGGIEEDVQNTVQLTEPQDAKKFVELTGVDALAVAIGTSHGAYKFKSESDIRLAIDRVKTISDLTGIPLVMHGSSSVPKDVKDMINKYGGKMPDAVGVPIESIVHAIGEGVCKINVDSDSRMAMTGAIRKVFVEHPEKFDPRDYLGPGRDAITEMLIPKIKAFGSAGHAGDYKVVSLEEAKAWYK.

S50 contributes to the beta-D-fructose 1,6-bisphosphate binding site. The active-site Proton donor is the D83. Zn(2+)-binding residues include H84 and H178. The beta-D-fructose 1,6-bisphosphate site is built by H178, G179, and K182. H210 contributes to the Zn(2+) binding site. Positions 211, 213, 253, 255, 256, 259, and 280 each coordinate beta-D-fructose 1,6-bisphosphate.

This sequence belongs to the class II fructose-bisphosphate aldolase family. In terms of assembly, homodimer. Requires Zn(2+) as cofactor.

It catalyses the reaction beta-D-fructose 1,6-bisphosphate = D-glyceraldehyde 3-phosphate + dihydroxyacetone phosphate. Its pathway is carbohydrate degradation; glycolysis; D-glyceraldehyde 3-phosphate and glycerone phosphate from D-glucose: step 4/4. Its function is as follows. Plays a key role in glycolysis by catalyzing the cleavage of fructose 1,6-bisphosphate into dihydroxyacetone phosphate and glyceraldehyde 3-phosphate. Does not cleave D-tagatose-1,6-bisphosphate. The sequence is that of Fructose-bisphosphate aldolase from Giardia intestinalis (strain ATCC 50803 / WB clone C6) (Giardia lamblia).